A 352-amino-acid polypeptide reads, in one-letter code: tRNA pseudouridine synthase D (352 aa).

Aspartate 81 (nucleophile) is an active-site residue. In terms of domain architecture, TRUD spans 157–303 (GVPNYFGLQR…MLHERRILRL (147 aa)).

It belongs to the pseudouridine synthase TruD family.

It carries out the reaction uridine(13) in tRNA = pseudouridine(13) in tRNA. Functionally, responsible for synthesis of pseudouridine from uracil-13 in transfer RNAs. This chain is tRNA pseudouridine synthase D, found in Azotobacter vinelandii (strain DJ / ATCC BAA-1303).